A 130-amino-acid chain; its full sequence is uncharacterized protein (130 aa).

Positions 1-62 (MRMYSSDAHE…ASGVGSSCKR (62 aa)) are disordered. A compositionally biased stretch (pro residues) spans 21–30 (PPHPLPPTGS).

This is an uncharacterized protein from Homo sapiens (Human).